The sequence spans 161 residues: Phosphopantetheine adenylyltransferase (161 aa).

Thr-10 contacts substrate. Residues 10–11 and His-18 each bind ATP; that span reads TF. Substrate-binding residues include Lys-42, Leu-75, and Arg-89. Residues 90-92, Glu-100, and 125-131 each bind ATP; these read GLR and YSFLSSS.

The protein belongs to the bacterial CoaD family. Homohexamer. Mg(2+) serves as cofactor.

The protein localises to the cytoplasm. The enzyme catalyses (R)-4'-phosphopantetheine + ATP + H(+) = 3'-dephospho-CoA + diphosphate. It functions in the pathway cofactor biosynthesis; coenzyme A biosynthesis; CoA from (R)-pantothenate: step 4/5. Its function is as follows. Reversibly transfers an adenylyl group from ATP to 4'-phosphopantetheine, yielding dephospho-CoA (dPCoA) and pyrophosphate. This Thermodesulfovibrio yellowstonii (strain ATCC 51303 / DSM 11347 / YP87) protein is Phosphopantetheine adenylyltransferase.